The following is a 209-amino-acid chain: MTQKKRSPSSTRWLKEHFDDQYVKKAQKLGLRSRAVFKIDEIQGKDKLLRTGMTVVDLGAAPGGWSQFAVEQVGDNGRVIACDILPMDPIAGVDFLQGDFREETVLGALLDRVGPDKVDVVMSDMAPNMSGTQQVDQARAMYLIELALDMCNQVLRTNGSFVVKVFQGEGFDAYLNEIRKLFSAVKIRKPDSSRARSREVYIVATGFKL.

Positions 63, 65, 83, 99, and 124 each coordinate S-adenosyl-L-methionine. Residue K164 is the Proton acceptor of the active site.

Belongs to the class I-like SAM-binding methyltransferase superfamily. RNA methyltransferase RlmE family.

The protein resides in the cytoplasm. The catalysed reaction is uridine(2552) in 23S rRNA + S-adenosyl-L-methionine = 2'-O-methyluridine(2552) in 23S rRNA + S-adenosyl-L-homocysteine + H(+). In terms of biological role, specifically methylates the uridine in position 2552 of 23S rRNA at the 2'-O position of the ribose in the fully assembled 50S ribosomal subunit. This Aeromonas salmonicida (strain A449) protein is Ribosomal RNA large subunit methyltransferase E.